Here is a 157-residue protein sequence, read N- to C-terminus: 17.8 kDa class I heat shock protein (157 aa).

Positions 43–157 (ETAAFVNTHI…PEVKAIDISG (115 aa)) constitute a sHSP domain.

This sequence belongs to the small heat shock protein (HSP20) family. In terms of assembly, forms oligomeric structures.

Its subcellular location is the cytoplasm. The chain is 17.8 kDa class I heat shock protein from Daucus carota (Wild carrot).